A 483-amino-acid chain; its full sequence is Siroheme synthase (483 aa).

The tract at residues 1-203 is precorrin-2 dehydrogenase /sirohydrochlorin ferrochelatase; the sequence is MNYFPIFANL…RQNTLAEREL (203 aa). NAD(+) is bound by residues 22–23 and 43–44; these read AV and KH. Phosphoserine is present on serine 128. A uroporphyrinogen-III C-methyltransferase region spans residues 214 to 483; the sequence is GFVSLVGAGP…LGTGQEQQAA (270 aa). Proline 223 lines the S-adenosyl-L-methionine pocket. Aspartate 246 serves as the catalytic Proton acceptor. The Proton donor role is filled by lysine 268. Residues 299–301, valine 304, 329–330, methionine 381, and glycine 410 contribute to the S-adenosyl-L-methionine site; these read GGD and TA.

In the N-terminal section; belongs to the precorrin-2 dehydrogenase / sirohydrochlorin ferrochelatase family. This sequence in the C-terminal section; belongs to the precorrin methyltransferase family.

The enzyme catalyses uroporphyrinogen III + 2 S-adenosyl-L-methionine = precorrin-2 + 2 S-adenosyl-L-homocysteine + H(+). It catalyses the reaction precorrin-2 + NAD(+) = sirohydrochlorin + NADH + 2 H(+). It carries out the reaction siroheme + 2 H(+) = sirohydrochlorin + Fe(2+). Its pathway is cofactor biosynthesis; adenosylcobalamin biosynthesis; precorrin-2 from uroporphyrinogen III: step 1/1. It participates in cofactor biosynthesis; adenosylcobalamin biosynthesis; sirohydrochlorin from precorrin-2: step 1/1. The protein operates within porphyrin-containing compound metabolism; siroheme biosynthesis; precorrin-2 from uroporphyrinogen III: step 1/1. It functions in the pathway porphyrin-containing compound metabolism; siroheme biosynthesis; siroheme from sirohydrochlorin: step 1/1. Its pathway is porphyrin-containing compound metabolism; siroheme biosynthesis; sirohydrochlorin from precorrin-2: step 1/1. Multifunctional enzyme that catalyzes the SAM-dependent methylations of uroporphyrinogen III at position C-2 and C-7 to form precorrin-2 via precorrin-1. Then it catalyzes the NAD-dependent ring dehydrogenation of precorrin-2 to yield sirohydrochlorin. Finally, it catalyzes the ferrochelation of sirohydrochlorin to yield siroheme. The protein is Siroheme synthase of Neisseria meningitidis serogroup C / serotype 2a (strain ATCC 700532 / DSM 15464 / FAM18).